The chain runs to 121 residues: UPF0102 protein BT_2236 (121 aa).

It belongs to the UPF0102 family.

The sequence is that of UPF0102 protein BT_2236 from Bacteroides thetaiotaomicron (strain ATCC 29148 / DSM 2079 / JCM 5827 / CCUG 10774 / NCTC 10582 / VPI-5482 / E50).